An 85-amino-acid polypeptide reads, in one-letter code: U4-theraphotoxin-Hhn1r (85 aa).

The first 22 residues, 1-22, serve as a signal peptide directing secretion; the sequence is MKVTLIAILTCAAVLVLHTTAA. A propeptide spanning residues 23–48 is cleaved from the precursor; the sequence is EELEAESQLMEVGMPDTELAAVDEER. 3 cysteine pairs are disulfide-bonded: cysteine 52-cysteine 66, cysteine 56-cysteine 77, and cysteine 71-cysteine 82.

Belongs to the neurotoxin 12 (Hwtx-2) family. 02 (Hwtx-2) subfamily. Expressed by the venom gland.

The protein resides in the secreted. Postsynaptic neurotoxin. This Cyriopagopus hainanus (Chinese bird spider) protein is U4-theraphotoxin-Hhn1r.